A 276-amino-acid chain; its full sequence is Adenylyl-sulfate kinase 1, chloroplastic (276 aa).

The transit peptide at 1–38 directs the protein to the chloroplast; the sequence is MIAAGAKSLLGLSMASPKGIFDSNSMSNSRSVVVVRAC. Positions 46 to 74 are disordered; sequence TLSHNKNGSIPEVKSINGHTGQKQGPLST. The segment covering 62-74 has biased composition (polar residues); that stretch reads NGHTGQKQGPLST. ATP is bound at residue 108–116; sequence GLSGSGKST. Residues D138, R141, R155, N158, 181–182, and G231 each bind substrate; that span reads IS. S182 acts as the Phosphoserine intermediate in catalysis.

It belongs to the APS kinase family. In terms of assembly, homodimer; disulfide-linked. Interacts with APK2. As to expression, expressed in root vasculature, root tips, leaf epidermal and guard cells, pollen grains and funiculus of developing seeds.

Its subcellular location is the plastid. It is found in the chloroplast. It carries out the reaction adenosine 5'-phosphosulfate + ATP = 3'-phosphoadenylyl sulfate + ADP + H(+). It participates in sulfur metabolism; hydrogen sulfide biosynthesis; sulfite from sulfate: step 2/3. Functionally, catalyzes the synthesis of activated sulfate. Essential for plant reproduction and viability. Required for the production of glucosinolates. The sequence is that of Adenylyl-sulfate kinase 1, chloroplastic (APK1) from Arabidopsis thaliana (Mouse-ear cress).